Here is a 147-residue protein sequence, read N- to C-terminus: MDVLHGHDLYDEQLIDRVGDAVNEDAGDDLDTLEDGQQQQRLGVNRQMDILLDAPQEPPLGVFPAQGGPNGPPRRRKKRSFYTMTKPTPPCQSQEPEMCLLMASVTRAMRHVREDQRGEYFANYLVENMTSQNYPNGMGLPQHWGQF.

The interval 55 to 93 (PQEPPLGVFPAQGGPNGPPRRRKKRSFYTMTKPTPPCQS) is disordered. Residues 82-93 (YTMTKPTPPCQS) show a composition bias toward polar residues. Asn128 carries N-linked (GlcNAc...) asparagine glycosylation.

Belongs to the male-specific scotti family. Expressed in primary spermatocytes and round spermatids. Low expression is seen in very short elongating cysts, but were detected at high levels in a few longer spermatid cysts.

Post-meiotically transcribed gene that has a role in late spermiogenesis; required for actin cone progression during spermatid individualization. This is Male-specific protein scotti from Drosophila melanogaster (Fruit fly).